Consider the following 178-residue polypeptide: MSGGKYVDSEGHLYTVPIREQGNIYKPNNKAMAEEVNEKQVYDAHTKEIDLVNRDPKHLNDDVVKIDFEDVIAEPEGTHSFDGIWKASFTTFTVTKYWFYRLLSALFGIPMALIWGIYFAILSFLHIWAVVPCIKSFLIEIQCISRVYSIYVHTFCDPLFEAIGKIFSNIRINMQKEI.

Ser2 is subject to N-acetylserine. Ser2 bears the Phosphoserine mark. Positions 2-94 (SGGKYVDSEG…WKASFTTFTV (93 aa)) are required for homooligomerization. Over 2-104 (SGGKYVDSEG…TKYWFYRLLS (103 aa)) the chain is Cytoplasmic. Lys5 is subject to N6-acetyllysine; alternate. Residue Lys5 forms a Glycyl lysine isopeptide (Lys-Gly) (interchain with G-Cter in ubiquitin); alternate linkage. At Tyr6 the chain carries Phosphotyrosine. Ser9 is subject to Phosphoserine. Tyr14 carries the phosphotyrosine; by ABL1 modification. Tyr25 is modified (phosphotyrosine). Glycyl lysine isopeptide (Lys-Gly) (interchain with G-Cter in ubiquitin) cross-links involve residues Lys26, Lys30, Lys39, Lys47, and Lys57. Residues 82-94 (DGIWKASFTTFTV) are interaction with CAVIN3. The helical intramembrane region spans 105 to 125 (ALFGIPMALIWGIYFAILSFL). The Cytoplasmic segment spans residues 126 to 178 (HIWAVVPCIKSFLIEIQCISRVYSIYVHTFCDPLFEAIGKIFSNIRINMQKEI). Positions 131 to 142 (VPCIKSFLIEIQ) are interacts with SPRY1, SPRY2, SPRY3 and SPRY4. Residues Cys133, Cys143, and Cys156 are each lipidated (S-palmitoyl cysteine). Residues 149-160 (SIYVHTFCDPLF) are interacts with SPRY1, SPRY2, and SPRY4. Positions 167–178 (FSNIRINMQKEI) are interacts with SPRY1, SPRY2, SPRY3 and SPRY4.

This sequence belongs to the caveolin family. Homooligomer. Interacts (via the N-terminus) with DPP4; the interaction is direct. Forms a stable heterooligomeric complex with CAV2 that targets to lipid rafts and drives caveolae formation. Interacts with PACSIN2; this interaction induces membrane tubulation. Interacts with BMX, BTK, CTNNB1, CDH1, GLIPR2, JUP, NOSTRIN, SNAP25 and STX1A. Interacts with SLC7A9. Interacts with TGFBR1. Interacts with CAVIN3 (via leucine-zipper domain) in a cholesterol-sensitive manner. Interacts with CAVIN1. Interacts with EHD2 in a cholesterol-dependent manner. Forms a ternary complex with UBXN6 and VCP; mediates CAV1 targeting to lysosomes for degradation. Interacts with ABCG1; this interaction regulates ABCG1-mediated cholesterol efflux. Interacts with NEU3; this interaction enhances NEU3 sialidase activity within caveola. Interacts (via C-terminus) with SPRY1, SPRY2 (via C-terminus), SPRY3, and SPRY4. Post-translationally, phosphorylated at Tyr-14 by ABL1 in response to oxidative stress. In terms of processing, ubiquitinated. Undergo monoubiquitination and multi- and/or polyubiquitination. Monoubiquitination of N-terminal lysines promotes integration in a ternary complex with UBXN6 and VCP which promotes oligomeric CAV1 targeting to lysosomes for degradation. Ubiquitinated by ZNRF1; leading to degradation and modulation of the TLR4-mediated immune response.

It is found in the golgi apparatus membrane. Its subcellular location is the cell membrane. It localises to the membrane. The protein resides in the caveola. The protein localises to the membrane raft. May act as a scaffolding protein within caveolar membranes. Forms a stable heterooligomeric complex with CAV2 that targets to lipid rafts and drives caveolae formation. Mediates the recruitment of CAVIN proteins (CAVIN1/2/3/4) to the caveolae. Interacts directly with G-protein alpha subunits and can functionally regulate their activity. Involved in the costimulatory signal essential for T-cell receptor (TCR)-mediated T-cell activation. Its binding to DPP4 induces T-cell proliferation and NF-kappa-B activation in a T-cell receptor/CD3-dependent manner. Recruits CTNNB1 to caveolar membranes and may regulate CTNNB1-mediated signaling through the Wnt pathway. Negatively regulates TGFB1-mediated activation of SMAD2/3 by mediating the internalization of TGFBR1 from membrane rafts leading to its subsequent degradation. Binds 20(S)-hydroxycholesterol (20(S)-OHC). The sequence is that of Caveolin-1 (CAV1) from Otolemur garnettii (Small-eared galago).